Reading from the N-terminus, the 121-residue chain is uncharacterized protein (121 aa).

The first 31 residues, 1-31 (MILNNKGFIRILEATIAGIMVILVFSYLVMS), serve as a signal peptide directing secretion.

This sequence to B.burgdorferi BB0465 N-terminal region.

This is an uncharacterized protein from Methanocaldococcus jannaschii (strain ATCC 43067 / DSM 2661 / JAL-1 / JCM 10045 / NBRC 100440) (Methanococcus jannaschii).